Here is a 127-residue protein sequence, read N- to C-terminus: Fluoride-specific ion channel FluC (127 aa).

4 helical membrane-spanning segments follow: residues 4–24 (FTLL…RYLI), 35–55 (GFPY…GILM), 71–91 (IIGL…MDNV), and 99–119 (FIKA…ACFI). The Na(+) site is built by G78 and T81.

The protein belongs to the fluoride channel Fluc/FEX (TC 1.A.43) family.

It is found in the cell inner membrane. The catalysed reaction is fluoride(in) = fluoride(out). With respect to regulation, na(+) is not transported, but it plays an essential structural role and its presence is essential for fluoride channel function. Functionally, fluoride-specific ion channel. Important for reducing fluoride concentration in the cell, thus reducing its toxicity. The sequence is that of Fluoride-specific ion channel FluC from Photobacterium profundum (strain SS9).